A 185-amino-acid chain; its full sequence is Der GTPase-activating protein YihI (185 aa).

Disordered regions lie at residues Met1 to Ile74 and Glu145 to Glu169. A compositionally biased stretch (basic and acidic residues) spans Asn23–Glu33. Positions Arg34–Ser47 are enriched in basic residues. Residues Arg48 to Leu68 are compositionally biased toward basic and acidic residues. The segment covering Glu145–Glu155 has biased composition (acidic residues).

Belongs to the YihI family. Interacts with Der.

In terms of biological role, a GTPase-activating protein (GAP) that modifies Der/EngA GTPase function. May play a role in ribosome biogenesis. The polypeptide is Der GTPase-activating protein YihI (Vibrio atlanticus (strain LGP32) (Vibrio splendidus (strain Mel32))).